The sequence spans 165 residues: Transcriptional repressor NrdR (165 aa).

The segment at 3-34 (CPFCRHPDSRVVDSREADEGQAIRRRRSCPEC) is a zinc-finger region. An ATP-cone domain is found at 46 to 136 (LSVVKRSGVT…VYKSFSSAAD (91 aa)).

The protein belongs to the NrdR family. Zn(2+) is required as a cofactor.

Its function is as follows. Negatively regulates transcription of bacterial ribonucleotide reductase nrd genes and operons by binding to NrdR-boxes. The polypeptide is Transcriptional repressor NrdR (Rhodococcus erythropolis (strain PR4 / NBRC 100887)).